The sequence spans 206 residues: dCTP deaminase, dUMP-forming (206 aa).

DCTP contacts are provided by residues 117-122 (RSSFGR), Asp-135, 143-145 (TLE), Gln-163, Tyr-177, Lys-184, and Gln-188. The active-site Proton donor/acceptor is the Glu-145.

This sequence belongs to the dCTP deaminase family. In terms of assembly, homotrimer.

It catalyses the reaction dCTP + 2 H2O = dUMP + NH4(+) + diphosphate. Its pathway is pyrimidine metabolism; dUMP biosynthesis; dUMP from dCTP: step 1/1. Functionally, bifunctional enzyme that catalyzes both the deamination of dCTP to dUTP and the hydrolysis of dUTP to dUMP without releasing the toxic dUTP intermediate. This Methanococcus vannielii (strain ATCC 35089 / DSM 1224 / JCM 13029 / OCM 148 / SB) protein is dCTP deaminase, dUMP-forming.